The chain runs to 103 residues: Large ribosomal subunit protein bL21 (103 aa).

The protein belongs to the bacterial ribosomal protein bL21 family. In terms of assembly, part of the 50S ribosomal subunit. Contacts protein L20.

In terms of biological role, this protein binds to 23S rRNA in the presence of protein L20. This Pectobacterium atrosepticum (strain SCRI 1043 / ATCC BAA-672) (Erwinia carotovora subsp. atroseptica) protein is Large ribosomal subunit protein bL21.